Consider the following 815-residue polypeptide: Cell division control protein 48 homolog D (815 aa).

An N-acetylalanine modification is found at alanine 2. Phosphoserine is present on serine 42. ATP contacts are provided by residues 249–256 (GPPGSGKT) and 522–529 (GPPGCGKT). Position 720 is a phosphoserine (serine 720). Positions 772–815 (GSEFRFPDAPTGTTGAFPGAAATVGGVDPFATSGGAADDDDLYS) are disordered. Residues 780-798 (APTGTTGAFPGAAATVGGV) show a composition bias toward low complexity.

This sequence belongs to the AAA ATPase family.

The protein resides in the nucleus. It localises to the cytoplasm. Its subcellular location is the cytoskeleton. The protein localises to the phragmoplast. Its function is as follows. Probably functions in cell division and growth processes. Interacts with certain SNAREs as part of specialized membrane fusion events where vesicles from the same organelle fuse (homotypic fusion). The polypeptide is Cell division control protein 48 homolog D (CDC48D) (Arabidopsis thaliana (Mouse-ear cress)).